The sequence spans 256 residues: Ribosomal RNA small subunit methyltransferase A (256 aa).

Residues His12, Leu14, Gly39, Glu60, Asp81, and Asn103 each coordinate S-adenosyl-L-methionine.

It belongs to the class I-like SAM-binding methyltransferase superfamily. rRNA adenine N(6)-methyltransferase family. RsmA subfamily.

The protein resides in the cytoplasm. The catalysed reaction is adenosine(1518)/adenosine(1519) in 16S rRNA + 4 S-adenosyl-L-methionine = N(6)-dimethyladenosine(1518)/N(6)-dimethyladenosine(1519) in 16S rRNA + 4 S-adenosyl-L-homocysteine + 4 H(+). In terms of biological role, specifically dimethylates two adjacent adenosines (A1518 and A1519) in the loop of a conserved hairpin near the 3'-end of 16S rRNA in the 30S particle. May play a critical role in biogenesis of 30S subunits. The chain is Ribosomal RNA small subunit methyltransferase A from Methylibium petroleiphilum (strain ATCC BAA-1232 / LMG 22953 / PM1).